Consider the following 838-residue polypeptide: MAKESLRIGVASTEPKRVKVYILEDNEWRDTGTGFCTGQCEQDKPHAYLLVRDEEQPERVLLKSKLEGNIEYQRQEETLIVWKDLQGQDIALSFEESTGCNALCEFICLVQKTFENNISLVSVRSNDDGMGSVHEIITGPVHLPSNDPQQNEETLMESLRILNENTSFEFLKNETVDFILNTNYLHTLINHFHIAEEKLLHKDLLLLSHIIKTLFLYNEREVLEQLIDDKHYMGVVGILEYDTDFPDCKASHRKCLQGVRPKFQEVIPLNDENMRQTINKTFRLQFLKDVVLIRFLDDHAFNLITDVMLTYQTTIIRCLQEGSFIDDLVNLYTNNADTSDSDLIERKRQGIRLLDECVQISCNLDPPDRSIFYKVLVKKGLFNVLDFAFNVETNSDIRILATDMIISIIEYDILLINSVRNEVDDSPFAATNEDSNINTGLIDEGGADSADNNCNGNSAVKAGESNGAESPIAPPGSRSPSRHTSDISLLLILSKILLTDQSPGLKEQAFQALITLLDPEDFMGEEYEDQSNLESLMKFYANSKLREKPSTPPQFQLLEYFTKFYEQVAPVLFQSFISGEVEGMDDQLLLRLVKLVDLLIHEHDIMLSRGFILENGILLTIGKLMEPSHIIQLRLAAVRCIKGIVAVNDEFYHNYLISKNLFDPICQLLQENLYFDNMANSCVLDLFKVISARFGQDQEYAEVSTKNFLVLNQYLVERFGPLLEKVDYVPYTSSMIQMSRVGRDAINKQQDNNGERNTTTGGEADNEEFDVMGAMDSSLASESDGENNENNEESPYGGAQNSKRSFSDIEDNTIGVEKGNPEPGLPIKKLAEEISESS.

2 disordered regions span residues 452–482 (NNCNGNSAVKAGESNGAESPIAPPGSRSPSR) and 745–838 (AINK…SESS). The segment covering 747-761 (NKQQDNNGERNTTTG) has biased composition (polar residues). Positions 783 to 792 (SDGENNENNE) are enriched in acidic residues.

As to quaternary structure, regulatory subunit 3 (R3) of the histone H2A phosphatase complex (HTP-C) consisting of PPH3, PSY2 and PSY4.

It is found in the nucleus. Functionally, core regulatory subunit of the histone H2A phosphatase complex, which dephosphorylates H2AS128ph (gamma-H2A) that has been displaced from sites of DNA lesions in the double-stranded DNA break repair process. Dephosphorylation is necessary for efficient recovery from the DNA damage checkpoint. This chain is Serine/threonine-protein phosphatase 4 regulatory subunit 3 (PSY2), found in Eremothecium gossypii (strain ATCC 10895 / CBS 109.51 / FGSC 9923 / NRRL Y-1056) (Yeast).